The following is an 802-amino-acid chain: Ribosomal protein S6 kinase alpha-5 (802 aa).

The span at 1–22 (MEEEGGSSGGAAGTSADGGDGG) shows a compositional bias: gly residues. A disordered region spans residues 1-23 (MEEEGGSSGGAAGTSADGGDGGE). A Protein kinase 1 domain is found at 49-318 (FELLKVLGTG…ADEIKEHLFF (270 aa)). ATP is bound by residues 55 to 63 (LGTGAYGKV) and Lys-81. Catalysis depends on Asp-177, which acts as the Proton acceptor. Ser-212 carries the post-translational modification Phosphoserine; by autocatalysis. In terms of domain architecture, AGC-kinase C-terminal spans 319–387 (QKINWDDLAA…VAPSILFKRN (69 aa)). A Phosphoserine; by MAPK1, MAPK3 and MAPK14 modification is found at Ser-360. Residues Ser-376 and Ser-381 each carry the phosphoserine; by autocatalysis modification. Residues 426–687 (DLKDKPLGEG…MSGLRYNEWL (262 aa)) enclose the Protein kinase 2 domain. Residues 432–440 (LGEGSFSIC) and Lys-455 each bind ATP. The active-site Proton acceptor is Asp-544. The residue at position 581 (Thr-581) is a Phosphothreonine; by MAPK1, MAPK3 and MAPK14. 4 positions are modified to phosphoserine: Ser-647, Ser-657, Ser-691, and Ser-695. Thr-700 carries the post-translational modification Phosphothreonine; by MAPK1, MAPK3 and MAPK14. Residues 741 to 802 (AKRRKMKKTS…TLFQFSDSVA (62 aa)) form a disordered region. The segment covering 749–779 (TSTSTETRSSSSESSHSSSSHSHGKTTPTKT) has biased composition (low complexity). Phosphoserine; by autocatalysis is present on residues Ser-750, Ser-752, and Ser-758. The span at 780–802 (LQPSNPADSNNPETLFQFSDSVA) shows a compositional bias: polar residues. Residue Ser-798 is modified to Phosphoserine.

It belongs to the protein kinase superfamily. AGC Ser/Thr protein kinase family. S6 kinase subfamily. As to quaternary structure, forms a complex with either MAPK1/ERK2 or MAPK3/ERK1 in quiescent cells which transiently dissociates following mitogenic stimulation. Also associates with MAPK14/p38-alpha. Activated RPS6KA5 associates with and phosphorylates the NF-kappa-B p65 subunit RELA. Interacts with CREBBP and EP300. The cofactor is Mg(2+). Post-translationally, ser-376 and Thr-581 phosphorylation is required for kinase activity. Ser-376 and Ser-212 are autophosphorylated by the C-terminal kinase domain, and their phosphorylation is essential for the catalytic activity of the N-terminal kinase domain. Phosphorylated at Ser-360, Thr-581 and Thr-700 by MAPK1/ERK2, MAPK3/ERK1 and MAPK14/p38-alpha. Autophosphorylated at Ser-750, Ser-752 and Ser-758 by the N-terminal kinase domain. Ubiquitinated.

The protein resides in the nucleus. It catalyses the reaction L-seryl-[protein] + ATP = O-phospho-L-seryl-[protein] + ADP + H(+). The enzyme catalyses L-threonyl-[protein] + ATP = O-phospho-L-threonyl-[protein] + ADP + H(+). Activated by phosphorylation at Ser-360, Thr-581 and Thr-700 by MAPK1/ERK2, MAPK3/ERK1 and MAPK14/p38-alpha, and by further autophosphorylation of Ser-212, Ser-376 and Ser-381 by the activated C-terminal kinase domain. The active N-terminal kinase domain finally phosphorylates downstream substrates, as well as Ser-750, Ser-752 and Ser-758 in its own C-terminal region. Serine/threonine-protein kinase that is required for the mitogen or stress-induced phosphorylation of the transcription factors CREB1 and ATF1 and for the regulation of the transcription factors RELA, STAT3 and ETV1/ER81, and that contributes to gene activation by histone phosphorylation and functions in the regulation of inflammatory genes. Phosphorylates CREB1 and ATF1 in response to mitogenic or stress stimuli such as UV-C irradiation, epidermal growth factor (EGF) and anisomycin. Plays an essential role in the control of RELA transcriptional activity in response to TNF and upon glucocorticoid, associates in the cytoplasm with the glucocorticoid receptor NR3C1 and contributes to RELA inhibition and repression of inflammatory gene expression. In skeletal myoblasts is required for phosphorylation of RELA at 'Ser-276' during oxidative stress. In erythropoietin-stimulated cells, is necessary for the 'Ser-727' phosphorylation of STAT3 and regulation of its transcriptional potential. Phosphorylates ETV1/ER81 at 'Ser-191' and 'Ser-216', and thereby regulates its ability to stimulate transcription, which may be important during development and breast tumor formation. Directly represses transcription via phosphorylation of 'Ser-1' of histone H2A. Phosphorylates 'Ser-10' of histone H3 in response to mitogenics, stress stimuli and EGF, which results in the transcriptional activation of several immediate early genes, including proto-oncogenes c-fos/FOS and c-jun/JUN. May also phosphorylate 'Ser-28' of histone H3. Mediates the mitogen- and stress-induced phosphorylation of high mobility group protein 1 (HMGN1/HMG14). In lipopolysaccharide-stimulated primary macrophages, acts downstream of the Toll-like receptor TLR4 to limit the production of pro-inflammatory cytokines. Functions probably by inducing transcription of the MAP kinase phosphatase DUSP1 and the anti-inflammatory cytokine interleukin 10 (IL10), via CREB1 and ATF1 transcription factors. Plays a role in neuronal cell death by mediating the downstream effects of excitotoxic injury. Phosphorylates TRIM7 at 'Ser-107' in response to growth factor signaling via the MEK/ERK pathway, thereby stimulating its ubiquitin ligase activity. The protein is Ribosomal protein S6 kinase alpha-5 (RPS6KA5) of Pongo abelii (Sumatran orangutan).